A 385-amino-acid polypeptide reads, in one-letter code: F-box only protein 4 (385 aa).

Phosphoserine is present on residues Ser-11 and Ser-46. Residues 54–100 (TSALTRLPVDVQLYILSFLSPHDLCQLGSTDHYWNKTIRDPILWRYF) form the F-box domain.

Homodimer. Part of the SCF (SKP1-CUL1-F-box) E3 ubiquitin-protein ligase complex SCF(FBXO4) formed of CUL1, SKP1, RBX1 and FBXO4. Interacts with TERF1; this interaction is prevented in the presence of GNL3L. Identified in a complex with CRYAB and CCND1. In terms of processing, phosphorylation at Ser-11 varies during the cell cycle. It is low in resting cells and high in the S phase and the G2/M phase of the cell cycle. Phosphorylation is decreased during late G1 phase. Phosphorylation at Ser-11 is important for homodimerization and for optimal ubiquitin ligase activity towards CCND1.

The protein resides in the cytoplasm. It functions in the pathway protein modification; protein ubiquitination. Its function is as follows. Substrate recognition component of a SCF (SKP1-CUL1-F-box protein) E3 ubiquitin-protein ligase complex that mediates the ubiquitination and subsequent proteasomal degradation of target proteins. Promotes ubiquitination of cyclin-D1 (CCND1) and its subsequent proteasomal degradation. However, it does not act as a major regulator of CCND1 stability during the G1/S transition. Recognizes TERF1 and promotes its ubiquitination together with UBE2D1. Promotes ubiquitination of FXR1 following phosphorylation of FXR1 by GSK3B, leading to FXR1 degradation by the proteasome. In Mus musculus (Mouse), this protein is F-box only protein 4.